The following is a 501-amino-acid chain: Lysine--tRNA ligase (501 aa).

Mg(2+)-binding residues include Glu412 and Glu419.

This sequence belongs to the class-II aminoacyl-tRNA synthetase family. Homodimer. Mg(2+) serves as cofactor.

The protein resides in the cytoplasm. The enzyme catalyses tRNA(Lys) + L-lysine + ATP = L-lysyl-tRNA(Lys) + AMP + diphosphate. This Dechloromonas aromatica (strain RCB) protein is Lysine--tRNA ligase.